A 305-amino-acid polypeptide reads, in one-letter code: Porphobilinogen deaminase (305 aa).

At Cys-240 the chain carries S-(dipyrrolylmethanemethyl)cysteine.

This sequence belongs to the HMBS family. In terms of assembly, monomer. Requires dipyrromethane as cofactor.

It carries out the reaction 4 porphobilinogen + H2O = hydroxymethylbilane + 4 NH4(+). It functions in the pathway porphyrin-containing compound metabolism; protoporphyrin-IX biosynthesis; coproporphyrinogen-III from 5-aminolevulinate: step 2/4. Functionally, tetrapolymerization of the monopyrrole PBG into the hydroxymethylbilane pre-uroporphyrinogen in several discrete steps. This chain is Porphobilinogen deaminase, found in Xylella fastidiosa (strain M23).